The chain runs to 452 residues: uncharacterized protein (452 aa).

Residues Met1–Leu452 form a disordered region. Polar residues-rich tracts occupy residues Arg29 to Asn41, Ser95 to Asn111, Ser129 to Arg144, and Ser163 to Ser176. Residues Asn177–Gly193 show a composition bias toward basic and acidic residues. Polar residues-rich tracts occupy residues Ser197–Arg212, Ser231–Asn245, Ser265–Arg280, Ser299–Arg314, Ser333–Lys347, Thr376–Asn394, and Ser412–Asn426. A compositionally biased stretch (basic and acidic residues) spans Glu439–Leu452.

This is an uncharacterized protein from Homo sapiens (Human).